Here is a 485-residue protein sequence, read N- to C-terminus: UDP-N-acetylmuramate--L-alanine ligase (485 aa).

129–135 is a binding site for ATP; that stretch reads GTHGKTT.

This sequence belongs to the MurCDEF family.

The protein localises to the cytoplasm. It carries out the reaction UDP-N-acetyl-alpha-D-muramate + L-alanine + ATP = UDP-N-acetyl-alpha-D-muramoyl-L-alanine + ADP + phosphate + H(+). It functions in the pathway cell wall biogenesis; peptidoglycan biosynthesis. Cell wall formation. The polypeptide is UDP-N-acetylmuramate--L-alanine ligase (Vibrio campbellii (strain ATCC BAA-1116)).